A 384-amino-acid polypeptide reads, in one-letter code: Acetylornithine aminotransferase (384 aa).

Pyridoxal 5'-phosphate is bound by residues 94–95 (GT) and F121. R124 contacts N(2)-acetyl-L-ornithine. 206–209 (DEVQ) lines the pyridoxal 5'-phosphate pocket. Position 235 is an N6-(pyridoxal phosphate)lysine (K235). Residue S263 participates in N(2)-acetyl-L-ornithine binding. Residue T264 participates in pyridoxal 5'-phosphate binding.

The protein belongs to the class-III pyridoxal-phosphate-dependent aminotransferase family. ArgD subfamily. Homodimer. Pyridoxal 5'-phosphate serves as cofactor.

Its subcellular location is the cytoplasm. The catalysed reaction is N(2)-acetyl-L-ornithine + 2-oxoglutarate = N-acetyl-L-glutamate 5-semialdehyde + L-glutamate. The protein operates within amino-acid biosynthesis; L-arginine biosynthesis; N(2)-acetyl-L-ornithine from L-glutamate: step 4/4. The chain is Acetylornithine aminotransferase from Listeria innocua serovar 6a (strain ATCC BAA-680 / CLIP 11262).